We begin with the raw amino-acid sequence, 453 residues long: Bifunctional protein GlmU (453 aa).

The segment at 1 to 226 is pyrophosphorylase; it reads MTLDVVILAA…ALEVEGVNNR (226 aa). UDP-N-acetyl-alpha-D-glucosamine is bound by residues 8-11, K22, Q73, 78-79, 99-101, G136, E151, N166, and N224; these read LAAG, GT, and YGD. D101 contacts Mg(2+). Residue N224 coordinates Mg(2+). Positions 227–247 are linker; it reads SQMAALERAYQRDRAERLLTE. The tract at residues 248-453 is N-acetyltransferase; it reads GVALADPARF…AGWKRPRKSS (206 aa). UDP-N-acetyl-alpha-D-glucosamine contacts are provided by R330 and K348. H360 functions as the Proton acceptor in the catalytic mechanism. UDP-N-acetyl-alpha-D-glucosamine is bound by residues Y363 and N374. Acetyl-CoA is bound by residues A377, 383 to 384, S402, A420, and R437; that span reads NY.

It in the N-terminal section; belongs to the N-acetylglucosamine-1-phosphate uridyltransferase family. This sequence in the C-terminal section; belongs to the transferase hexapeptide repeat family. As to quaternary structure, homotrimer. The cofactor is Mg(2+).

It is found in the cytoplasm. The catalysed reaction is alpha-D-glucosamine 1-phosphate + acetyl-CoA = N-acetyl-alpha-D-glucosamine 1-phosphate + CoA + H(+). It carries out the reaction N-acetyl-alpha-D-glucosamine 1-phosphate + UTP + H(+) = UDP-N-acetyl-alpha-D-glucosamine + diphosphate. It functions in the pathway nucleotide-sugar biosynthesis; UDP-N-acetyl-alpha-D-glucosamine biosynthesis; N-acetyl-alpha-D-glucosamine 1-phosphate from alpha-D-glucosamine 6-phosphate (route II): step 2/2. Its pathway is nucleotide-sugar biosynthesis; UDP-N-acetyl-alpha-D-glucosamine biosynthesis; UDP-N-acetyl-alpha-D-glucosamine from N-acetyl-alpha-D-glucosamine 1-phosphate: step 1/1. The protein operates within bacterial outer membrane biogenesis; LPS lipid A biosynthesis. In terms of biological role, catalyzes the last two sequential reactions in the de novo biosynthetic pathway for UDP-N-acetylglucosamine (UDP-GlcNAc). The C-terminal domain catalyzes the transfer of acetyl group from acetyl coenzyme A to glucosamine-1-phosphate (GlcN-1-P) to produce N-acetylglucosamine-1-phosphate (GlcNAc-1-P), which is converted into UDP-GlcNAc by the transfer of uridine 5-monophosphate (from uridine 5-triphosphate), a reaction catalyzed by the N-terminal domain. This Chromohalobacter salexigens (strain ATCC BAA-138 / DSM 3043 / CIP 106854 / NCIMB 13768 / 1H11) protein is Bifunctional protein GlmU.